Consider the following 480-residue polypeptide: Siroheme synthase 2 (480 aa).

The interval 1–202 is precorrin-2 dehydrogenase /sirohydrochlorin ferrochelatase; it reads MDYLPMFARL…QDWQSAETWL (202 aa). NAD(+)-binding positions include 22–23 and 43–44; these read EV and PE. Phosphoserine is present on Ser126. Residues 214–480 form a uroporphyrinogen-III C-methyltransferase region; that stretch reads GEVVLVGAGP…GCDLKLVNLA (267 aa). Pro223 provides a ligand contact to S-adenosyl-L-methionine. Asp246 (proton acceptor) is an active-site residue. Lys268 (proton donor) is an active-site residue. S-adenosyl-L-methionine contacts are provided by residues 299 to 301, 329 to 330, Met381, and Gly410; these read GGD and TA.

It in the N-terminal section; belongs to the precorrin-2 dehydrogenase / sirohydrochlorin ferrochelatase family. In the C-terminal section; belongs to the precorrin methyltransferase family.

It catalyses the reaction uroporphyrinogen III + 2 S-adenosyl-L-methionine = precorrin-2 + 2 S-adenosyl-L-homocysteine + H(+). It carries out the reaction precorrin-2 + NAD(+) = sirohydrochlorin + NADH + 2 H(+). The enzyme catalyses siroheme + 2 H(+) = sirohydrochlorin + Fe(2+). The protein operates within cofactor biosynthesis; adenosylcobalamin biosynthesis; precorrin-2 from uroporphyrinogen III: step 1/1. It functions in the pathway cofactor biosynthesis; adenosylcobalamin biosynthesis; sirohydrochlorin from precorrin-2: step 1/1. Its pathway is porphyrin-containing compound metabolism; siroheme biosynthesis; precorrin-2 from uroporphyrinogen III: step 1/1. It participates in porphyrin-containing compound metabolism; siroheme biosynthesis; siroheme from sirohydrochlorin: step 1/1. The protein operates within porphyrin-containing compound metabolism; siroheme biosynthesis; sirohydrochlorin from precorrin-2: step 1/1. Functionally, multifunctional enzyme that catalyzes the SAM-dependent methylations of uroporphyrinogen III at position C-2 and C-7 to form precorrin-2 via precorrin-1. Then it catalyzes the NAD-dependent ring dehydrogenation of precorrin-2 to yield sirohydrochlorin. Finally, it catalyzes the ferrochelation of sirohydrochlorin to yield siroheme. In Aeromonas salmonicida (strain A449), this protein is Siroheme synthase 2.